Here is a 266-residue protein sequence, read N- to C-terminus: 3-deoxy-manno-octulosonate cytidylyltransferase (266 aa).

The protein belongs to the KdsB family.

The protein resides in the cytoplasm. It catalyses the reaction 3-deoxy-alpha-D-manno-oct-2-ulosonate + CTP = CMP-3-deoxy-beta-D-manno-octulosonate + diphosphate. The protein operates within nucleotide-sugar biosynthesis; CMP-3-deoxy-D-manno-octulosonate biosynthesis; CMP-3-deoxy-D-manno-octulosonate from 3-deoxy-D-manno-octulosonate and CTP: step 1/1. Its pathway is bacterial outer membrane biogenesis; lipopolysaccharide biosynthesis. Functionally, activates KDO (a required 8-carbon sugar) for incorporation into bacterial lipopolysaccharide in Gram-negative bacteria. The polypeptide is 3-deoxy-manno-octulosonate cytidylyltransferase (Paraburkholderia xenovorans (strain LB400)).